The following is a 279-amino-acid chain: Urease accessory protein UreD (279 aa).

Belongs to the UreD family. In terms of assembly, ureD, UreF and UreG form a complex that acts as a GTP-hydrolysis-dependent molecular chaperone, activating the urease apoprotein by helping to assemble the nickel containing metallocenter of UreC. The UreE protein probably delivers the nickel.

The protein localises to the cytoplasm. Its function is as follows. Required for maturation of urease via the functional incorporation of the urease nickel metallocenter. The chain is Urease accessory protein UreD from Trichodesmium erythraeum (strain IMS101).